The sequence spans 320 residues: Aspartate carbamoyltransferase catalytic subunit (320 aa).

Positions 53 and 54 each coordinate carbamoyl phosphate. Lysine 82 is a binding site for L-aspartate. Carbamoyl phosphate is bound by residues arginine 103, histidine 131, and glutamine 134. Residues arginine 164 and arginine 227 each coordinate L-aspartate. Carbamoyl phosphate-binding residues include leucine 266 and proline 267.

This sequence belongs to the aspartate/ornithine carbamoyltransferase superfamily. ATCase family. As to quaternary structure, heterododecamer (2C3:3R2) of six catalytic PyrB chains organized as two trimers (C3), and six regulatory PyrI chains organized as three dimers (R2).

It carries out the reaction carbamoyl phosphate + L-aspartate = N-carbamoyl-L-aspartate + phosphate + H(+). Its pathway is pyrimidine metabolism; UMP biosynthesis via de novo pathway; (S)-dihydroorotate from bicarbonate: step 2/3. Catalyzes the condensation of carbamoyl phosphate and aspartate to form carbamoyl aspartate and inorganic phosphate, the committed step in the de novo pyrimidine nucleotide biosynthesis pathway. The sequence is that of Aspartate carbamoyltransferase catalytic subunit from Bifidobacterium longum (strain NCC 2705).